The chain runs to 64 residues: Small ribosomal subunit protein bS21 (64 aa).

This sequence belongs to the bacterial ribosomal protein bS21 family.

This Anaeromyxobacter dehalogenans (strain 2CP-1 / ATCC BAA-258) protein is Small ribosomal subunit protein bS21.